The chain runs to 399 residues: Na(+)/H(+) antiporter NhaA (399 aa).

Transmembrane regions (helical) follow at residues 14–34 (AGGI…NSPL), 59–79 (LIHW…GLEV), 95–115 (SLPT…YLLF), 124–144 (AGWA…MALL), 154–174 (VFLL…IAMF), 177–197 (TDLS…LVGL), 213–233 (LILW…GVII), 261–281 (FIIL…PMSF), 290–310 (VGIA…FSYI), 331–351 (VALM…LAFV), and 363–383 (LGIL…LAKV).

It belongs to the NhaA Na(+)/H(+) (TC 2.A.33) antiporter family.

It is found in the cell inner membrane. It carries out the reaction Na(+)(in) + 2 H(+)(out) = Na(+)(out) + 2 H(+)(in). Its function is as follows. Na(+)/H(+) antiporter that extrudes sodium in exchange for external protons. The protein is Na(+)/H(+) antiporter NhaA of Shewanella sediminis (strain HAW-EB3).